Here is a 275-residue protein sequence, read N- to C-terminus: NH(3)-dependent NAD(+) synthetase (275 aa).

Position 50–57 (50–57 (GISGGVDS)) interacts with ATP. D56 contacts Mg(2+). A deamido-NAD(+)-binding site is contributed by R147. T167 is a binding site for ATP. E172 contacts Mg(2+). 2 residues coordinate deamido-NAD(+): K180 and D187. The ATP site is built by K196 and T218. Residue 267–268 (HK) participates in deamido-NAD(+) binding.

This sequence belongs to the NAD synthetase family. As to quaternary structure, homodimer.

The catalysed reaction is deamido-NAD(+) + NH4(+) + ATP = AMP + diphosphate + NAD(+) + H(+). It participates in cofactor biosynthesis; NAD(+) biosynthesis; NAD(+) from deamido-NAD(+) (ammonia route): step 1/1. In terms of biological role, catalyzes the ATP-dependent amidation of deamido-NAD to form NAD. Uses ammonia as a nitrogen source. This is NH(3)-dependent NAD(+) synthetase from Pseudomonas putida (strain GB-1).